Here is a 476-residue protein sequence, read N- to C-terminus: Salicylate biosynthesis isochorismate synthase (476 aa).

Residues 181 to 202 (RRRPSGPTAGAQGDASAQERRQ) are disordered.

Belongs to the isochorismate synthase family.

It catalyses the reaction chorismate = isochorismate. It participates in siderophore biosynthesis; salicylate biosynthesis. Functionally, involved in the conversion of chorismate to salicylate. This is Salicylate biosynthesis isochorismate synthase (pchA) from Pseudomonas aeruginosa (strain ATCC 15692 / DSM 22644 / CIP 104116 / JCM 14847 / LMG 12228 / 1C / PRS 101 / PAO1).